Reading from the N-terminus, the 149-residue chain is Azurin (149 aa).

Positions 1–20 are cleaved as a signal peptide; that stretch reads MLAKATLAIVLSAASLPVLA. The 129-residue stretch at 21-149 folds into the Plastocyanin-like domain; the sequence is AQCEATIESN…MMKGTLKLSN (129 aa). Cys-23 and Cys-46 are oxidised to a cystine. Cu cation is bound by residues His-66, Cys-132, His-137, and Met-141.

The protein localises to the periplasm. Transfers electrons from cytochrome c551 to cytochrome oxidase. The polypeptide is Azurin (azu) (Achromobacter denitrificans (Alcaligenes denitrificans)).